The sequence spans 383 residues: tRNA(Met) cytidine acetate ligase (383 aa).

ATP-binding positions include 7-20 (IAEFNPFHSGHEFL), Gly-101, Asn-153, and 178-179 (RI).

This sequence belongs to the TmcAL family.

Its subcellular location is the cytoplasm. It catalyses the reaction cytidine(34) in elongator tRNA(Met) + acetate + ATP = N(4)-acetylcytidine(34) in elongator tRNA(Met) + AMP + diphosphate. Its function is as follows. Catalyzes the formation of N(4)-acetylcytidine (ac(4)C) at the wobble position of elongator tRNA(Met), using acetate and ATP as substrates. First activates an acetate ion to form acetyladenylate (Ac-AMP) and then transfers the acetyl group to tRNA to form ac(4)C34. This chain is tRNA(Met) cytidine acetate ligase, found in Lactobacillus helveticus (strain DPC 4571).